A 213-amino-acid polypeptide reads, in one-letter code: Pyrrolidone-carboxylate peptidase (213 aa).

Active-site residues include E78, C141, and H165.

This sequence belongs to the peptidase C15 family. Homotetramer.

It is found in the cytoplasm. It catalyses the reaction Release of an N-terminal pyroglutamyl group from a polypeptide, the second amino acid generally not being Pro.. Removes 5-oxoproline from various penultimate amino acid residues except L-proline. The protein is Pyrrolidone-carboxylate peptidase of Enterococcus faecalis (strain ATCC 700802 / V583).